The primary structure comprises 311 residues: Ribonuclease HIII (311 aa).

Residues 95–311 enclose the RNase H type-2 domain; that stretch reads MSIVGSDEVG…NTEKAFRLLK (217 aa). 3 residues coordinate a divalent metal cation: aspartate 101, glutamate 102, and aspartate 206.

Belongs to the RNase HII family. RnhC subfamily. The cofactor is Mn(2+). It depends on Mg(2+) as a cofactor.

Its subcellular location is the cytoplasm. It carries out the reaction Endonucleolytic cleavage to 5'-phosphomonoester.. In terms of biological role, endonuclease that specifically degrades the RNA of RNA-DNA hybrids. This chain is Ribonuclease HIII, found in Bacillus cereus (strain ATCC 10987 / NRS 248).